Consider the following 623-residue polypeptide: Dynein axonemal intermediate chain 2 (623 aa).

5 WD repeats span residues 214–254, 261–302, 362–401, 405–445, and 450–489; these read KPLS…LVAE, SHRD…EPIE, GHHG…SSIM, YHMA…CDPA, and VCDD…STLQ. The disordered stretch occupies residues 565–602; the sequence is AEALKKKPKPRKKSSVKVEAEEEVEENVGEEEEAGGII. Residues 570-579 show a composition bias toward basic residues; it reads KKPKPRKKSS. Positions 584–598 are enriched in acidic residues; that stretch reads AEEEVEENVGEEEEA.

Belongs to the dynein intermediate chain family. In terms of assembly, consists of at least two heavy chains and a number of intermediate and light chains. Interacts with DNAAF2. Interacts with DNAAF6/PIH1D3. Interacts with HEATR2; probably involved in outer arm dynein assembly. Interacts with CFAP53. Predominantly expressed in ovary, testis and lung.

It is found in the cytoplasm. It localises to the cytoskeleton. The protein localises to the cilium axoneme. The protein resides in the dynein axonemal particle. Functionally, part of the dynein complex of respiratory cilia. The sequence is that of Dynein axonemal intermediate chain 2 (Dnai2) from Mus musculus (Mouse).